The chain runs to 289 residues: MKREDVLMEALPYIQKFYGKTIVIKLGGHAMVDQSILETVIRDAVLLRYVGMKVVLVHGGGPEITAKMQAMGKEPKFVGGLRITDPETLEIAQMVLVGKINDGIVSLIANCGTRAVGISGNDGNLLIARKMDPQRVQVGEVMQEVDLGQVGEIEEVDPEVLHCLLAQNYIPVVAPIAIDRQGMSLNINADTAAAEIAIALSAFKLVNLTDVDGVMDADRTMVYHRLALTEAEAMIGAGVIAGGMIPKLEGCMKAVRNGVASAHVVNGNREHNLLLELFTDQGVGTMLTL.

Residues 60-61, R82, and N186 contribute to the substrate site; that span reads GG.

This sequence belongs to the acetylglutamate kinase family. ArgB subfamily.

Its subcellular location is the cytoplasm. The catalysed reaction is N-acetyl-L-glutamate + ATP = N-acetyl-L-glutamyl 5-phosphate + ADP. It functions in the pathway amino-acid biosynthesis; L-arginine biosynthesis; N(2)-acetyl-L-ornithine from L-glutamate: step 2/4. In terms of biological role, catalyzes the ATP-dependent phosphorylation of N-acetyl-L-glutamate. The polypeptide is Acetylglutamate kinase (Methanoculleus marisnigri (strain ATCC 35101 / DSM 1498 / JR1)).